The following is a 1423-amino-acid chain: Histone-lysine N-methyltransferase ATXR7 (1423 aa).

Positions 263 to 312 (HACWFLVDGEGRNHGPHSILELFSWQQHGYVSDAALIRDGENKLRPITLA) constitute a GYF domain. Disordered regions lie at residues 923-960 (CKDH…EGTK), 1057-1097 (CSIS…SSTD), and 1115-1158 (LPCH…GRPK). Residues 936 to 949 (QKVKKAHTSKLKRK) show a composition bias toward basic residues. Basic and acidic residues predominate over residues 950-959 (NLSDARDEGT). The segment covering 1057–1071 (CSISQKGRKSSQSSI) has biased composition (polar residues). 2 stretches are compositionally biased toward basic and acidic residues: residues 1115-1124 (LPCHTSDKLQ) and 1140-1157 (HTTE…DGRP). The region spanning 1266–1383 (KHLRFQQSKI…AGEEISYNYK (118 aa)) is the SET domain. Tyr-1382 lines the S-adenosyl-L-methionine pocket.

This sequence belongs to the class V-like SAM-binding methyltransferase superfamily. Histone-lysine methyltransferase family. TRX/MLL subfamily. As to expression, expressed in the shoot and root apices, vascular tissues and mesophyll cells of rosette leaves.

The protein resides in the nucleus. It catalyses the reaction L-lysyl(4)-[histone H3] + 3 S-adenosyl-L-methionine = N(6),N(6),N(6)-trimethyl-L-lysyl(4)-[histone H3] + 3 S-adenosyl-L-homocysteine + 3 H(+). The catalysed reaction is L-lysyl(36)-[histone H3] + 2 S-adenosyl-L-methionine = N(6),N(6)-dimethyl-L-lysyl(36)-[histone H3] + 2 S-adenosyl-L-homocysteine + 2 H(+). Its function is as follows. Histone methyltransferase involved in regulation of flowering time. Required for the expression of the flowering repressors FLC and MADS-box genes of the MAF family. Required for histone H3 dimethylation on 'Lys-36' H3K36me2 at the FLC locus. Required for histone H3 trimethylation on 'Lys-4' (H3K4me3) at the FLC locus. Prevents trimethylation on 'Lys-27' (H3K27me3) at the same locus. Involved in the control of seed dormancy and germination. This Arabidopsis thaliana (Mouse-ear cress) protein is Histone-lysine N-methyltransferase ATXR7.